A 576-amino-acid chain; its full sequence is Non-neuronal cytoplasmic intermediate filament protein (576 aa).

The interval 1 to 51 (MTSKISTTYEEEGRQSKIQPRAFVITRSGPSSKSSSFSARQSYASSRQSIT) is disordered. Residues 2-75 (TSKISTTYEE…FRGTREKEKR (74 aa)) are head. Residues 28–49 (SGPSSKSSSFSARQSYASSRQS) show a composition bias toward low complexity. The IF rod domain occupies 73-425 (EKREMQNLNE…KLLEGEESRV (353 aa)). The tract at residues 76–108 (EMQNLNERLASYIEKVHFLDAQVKKLEAENEAL) is coil 1A. A linker 1 region spans residues 109-122 (RNRKSESLQPIRDA). A coil 1B region spans residues 123–260 (YENELAQARK…DLLDQLELLK (138 aa)). The tract at residues 261 to 278 (PEPIQIKGMDYAEFWKSE) is linker 2. A coil 2 region spans residues 279–425 (LSKCVREIQS…KLLEGEESRV (147 aa)). Positions 426-576 (GLRSLVEQAI…KATLIAKFSG (151 aa)) are tail. The LTD domain occupies 456–574 (GSMTIQRSSK…NEKATLIAKF (119 aa)).

The protein belongs to the intermediate filament family. In terms of assembly, can form homopolymers.

Its subcellular location is the cytoplasm. The polypeptide is Non-neuronal cytoplasmic intermediate filament protein (Cornu aspersum (Brown garden snail)).